We begin with the raw amino-acid sequence, 780 residues long: Kojibiose phosphorylase (780 aa).

354–355 (WD) serves as a coordination point for substrate. Glu496 functions as the Proton donor in the catalytic mechanism. 608-609 (KQ) contacts substrate.

This sequence belongs to the glycosyl hydrolase 65 family.

It carries out the reaction kojibiose + phosphate = beta-D-glucose 1-phosphate + D-glucose. Functionally, catalyzes the reversible phosphorolysis of kojibiose into beta-D-glucose 1-phosphate (Glc1P) and D-glucose. In the reverse direction, uses Glc1P as acceptor to produce alpha-1,2-glucans up to a degree of polymerization of 6. In Halothermothrix orenii (strain H 168 / OCM 544 / DSM 9562), this protein is Kojibiose phosphorylase.